We begin with the raw amino-acid sequence, 427 residues long: Serine protease HTRA2, mitochondrial (427 aa).

Residues 33–55 (HTASSSKGSGGDNSKDKENNGQN) are disordered. A helical membrane pass occupies residues 66 to 86 (SAFQFCVPFSLGALVSAVLIE). The short motif at 78–81 (ALVS) is the IAP-binding element. The serine protease stretch occupies residues 144 to 307 (SNGSGFVIEQ…IPIDYVKVFL (164 aa)). Residues His-162, Asp-194, and Ser-271 each act as charge relay system in the active site. In terms of domain architecture, PDZ spans 330–415 (MGITMLTLTP…DLEIVILRGV (86 aa)).

Belongs to the peptidase S1C family. In terms of assembly, interacts with th/DIAP1 (via BIR 2 domain).

The protein localises to the mitochondrion intermembrane space. The protein resides in the mitochondrion membrane. It catalyses the reaction Cleavage of non-polar aliphatic amino-acids at the P1 position, with a preference for Val, Ile and Met. At the P2 and P3 positions, Arg is selected most strongly with a secondary preference for other hydrophilic residues.. Serine protease that shows proteolytic activity against a non-specific substrate beta-casein. Promotes or induces cell death either by direct binding to and inhibition of BIRC proteins (also called inhibitor of apoptosis proteins, IAPs), leading to an increase in caspase activity, or by a BIRC inhibition-independent, caspase-independent and serine protease activity-dependent mechanism. Can antagonize antiapoptotic activity of th/Diap1 by directly inducing the degradation of th/Diap1. This is Serine protease HTRA2, mitochondrial from Drosophila pseudoobscura pseudoobscura (Fruit fly).